The chain runs to 556 residues: Formate--tetrahydrofolate ligase (556 aa).

ATP is bound at residue 65–72 (TPAGEGKT).

Belongs to the formate--tetrahydrofolate ligase family.

It catalyses the reaction (6S)-5,6,7,8-tetrahydrofolate + formate + ATP = (6R)-10-formyltetrahydrofolate + ADP + phosphate. The protein operates within one-carbon metabolism; tetrahydrofolate interconversion. In Symbiobacterium thermophilum (strain DSM 24528 / JCM 14929 / IAM 14863 / T), this protein is Formate--tetrahydrofolate ligase.